The primary structure comprises 522 residues: MTSEITNQMASTKLSDASASTLADWKEGLKAPAKDARPQTEDVTATKGLEFEDFFIKRELMMGIFEAGFEKPSPIQEETIPVALTGRDILARAKNGTGKTAAFVIPTLERVNPKISKTQALILVPTRELALQTSQVCKTLGKHLGINVMVSTGGTGLKDDIIRLSDPVHIIVGTPGRILDLAGKGVADLSTCQTFVMDEADKLLSPEFTPVVEQLLGFHPKDRQVMLFSATFPIVVKTFKDKHMNSPYEINLMDELTLRGITQYYAFVEEKQKVHCLNTLFNKLQINQSIIFCNSTNRVELLAKKITELGYSCFYSHARMLQHNRNRVFHDFRNGVCRNLVCSDLLTRGIDIQAVNVVINFDFPKNAETYLHRIGRSGRFGHLGLAINLINWEDRFNLYRIEQELGTEIQPIPQVIEKNLYVYESPENIPRPISSSQRQPGQQQEQDGTVVRNNQGQNPRGNFRGGRGGGGGGQFQGQRRNPPPGQGQPQQGQGMGQVQQPRQNGQQAQRNPQRQPTGPPQA.

Positions 49–77 (LEFEDFFIKRELMMGIFEAGFEKPSPIQE) match the Q motif motif. A Helicase ATP-binding domain is found at 80-250 (IPVALTGRDI…DKHMNSPYEI (171 aa)). 93–100 (AKNGTGKT) provides a ligand contact to ATP. The short motif at 198-201 (DEAD) is the DEAD box element. The 161-residue stretch at 260–420 (GITQYYAFVE…PIPQVIEKNL (161 aa)) folds into the Helicase C-terminal domain. Residues 427 to 522 (ENIPRPISSS…QRQPTGPPQA (96 aa)) are disordered. Low complexity-rich tracts occupy residues 430 to 446 (PRPI…QQEQ) and 453 to 462 (NNQGQNPRGN). The span at 463 to 475 (FRGGRGGGGGGQF) shows a compositional bias: gly residues. Residues 487–516 (GQPQQGQGMGQVQQPRQNGQQAQRNPQRQP) show a composition bias toward low complexity.

Belongs to the DEAD box helicase family. DDX6/DHH1 subfamily.

Its subcellular location is the cytoplasm. The protein localises to the P-body. It catalyses the reaction ATP + H2O = ADP + phosphate + H(+). Its function is as follows. ATP-dependent RNA helicase involved in mRNA turnover, and more specifically in mRNA decapping. Is involved in G1/S DNA-damage checkpoint recovery, probably through the regulation of the translational status of a subset of mRNAs. May also have a role in translation and mRNA nuclear export. The chain is ATP-dependent RNA helicase DHH1 (DHH1) from Phaeosphaeria nodorum (strain SN15 / ATCC MYA-4574 / FGSC 10173) (Glume blotch fungus).